The following is a 193-amino-acid chain: dTTP/UTP pyrophosphatase (193 aa).

Residue Asp-70 is the Proton acceptor of the active site.

The protein belongs to the Maf family. YhdE subfamily. Requires a divalent metal cation as cofactor.

Its subcellular location is the cytoplasm. The enzyme catalyses dTTP + H2O = dTMP + diphosphate + H(+). It catalyses the reaction UTP + H2O = UMP + diphosphate + H(+). In terms of biological role, nucleoside triphosphate pyrophosphatase that hydrolyzes dTTP and UTP. May have a dual role in cell division arrest and in preventing the incorporation of modified nucleotides into cellular nucleic acids. The chain is dTTP/UTP pyrophosphatase from Alcanivorax borkumensis (strain ATCC 700651 / DSM 11573 / NCIMB 13689 / SK2).